The primary structure comprises 219 residues: PKHD-type hydroxylase SYNPCC7002_A2658 (219 aa).

In terms of domain architecture, Fe2OG dioxygenase spans 78 to 172; that stretch reads TVHTLLFSRY…RLVAVGWVQS (95 aa). Fe cation-binding residues include histidine 96, aspartate 98, and histidine 153. Arginine 163 is a 2-oxoglutarate binding site.

Requires Fe(2+) as cofactor. It depends on L-ascorbate as a cofactor.

In Picosynechococcus sp. (strain ATCC 27264 / PCC 7002 / PR-6) (Agmenellum quadruplicatum), this protein is PKHD-type hydroxylase SYNPCC7002_A2658.